A 527-amino-acid polypeptide reads, in one-letter code: Bifunctional methyltransferase (527 aa).

The interval methionine 1–proline 309 is hemK. Residues methionine 1–asparagine 311 are RF MTase. S-adenosyl-L-methionine is bound by residues glycine 149–glycine 153, aspartate 172, tryptophan 201, asparagine 216, glutamate 356, glutamate 381, asparagine 408, and aspartate 430. Substrate is bound at residue asparagine 216–tyrosine 219. The tract at residues isoleucine 310–histidine 527 is tRNA (guanine-N(7)-)-methyltransferase. Positions arginine 314 to histidine 527 are tRNA MTase. Aspartate 430 is a catalytic residue. 2 residues coordinate substrate: lysine 434 and aspartate 466.

In the C-terminal section; belongs to the class I-like SAM-binding methyltransferase superfamily. TrmB family. It in the N-terminal section; belongs to the protein N5-glutamine methyltransferase family. PrmC subfamily.

The enzyme catalyses L-glutaminyl-[peptide chain release factor] + S-adenosyl-L-methionine = N(5)-methyl-L-glutaminyl-[peptide chain release factor] + S-adenosyl-L-homocysteine + H(+). It catalyses the reaction guanosine(46) in tRNA + S-adenosyl-L-methionine = N(7)-methylguanosine(46) in tRNA + S-adenosyl-L-homocysteine. Its function is as follows. Methylates the class 1 translation termination release factors RF1/PrfA and RF2/PrfB on the glutamine residue of the universally conserved GGQ motif. Functionally, catalyzes the formation of N(7)-methylguanine at position 46 (m7G46) in tRNA. The protein is Bifunctional methyltransferase (prmC/trmB) of Rickettsia felis (strain ATCC VR-1525 / URRWXCal2) (Rickettsia azadi).